A 92-amino-acid polypeptide reads, in one-letter code: 10 kDa late embryogenesis abundant protein (92 aa).

Over residues 1 to 10 (MASQQGQQTR) the composition is skewed to polar residues. Positions 1 to 92 (MASQQGQQTR…GEREEEEEED (92 aa)) are disordered. Basic and acidic residues-rich tracts occupy residues 11–26 (KIPE…RAAK) and 38–71 (KSLE…EMGK).

It belongs to the small hydrophilic plant seed protein family. In terms of tissue distribution, maximally expressed in dry seeds. Also present in mid-maturation embryos.

Functionally, LEA proteins are late embryonic proteins abundant in higher plant seed embryos. They may play an essential role in seed survival and in controlling water exchanges during seed desiccation and imbibition. This is 10 kDa late embryogenesis abundant protein from Helianthus annuus (Common sunflower).